The following is a 243-amino-acid chain: 3,4-dihydroxyphthalate decarboxylase (243 aa).

The active-site Proton donor/acceptor is the glutamate 86. Positions 86, 105, 107, and 173 each coordinate a divalent metal cation.

The protein belongs to the aldolase class II family. A divalent metal cation serves as cofactor.

The catalysed reaction is 3,4-dihydroxyphthalate + H(+) = 3,4-dihydroxybenzoate + CO2. It participates in xenobiotic degradation; phthalate degradation. Catalyzes the decarboxylation of 3,4-dihydroxyphthalate to protocatechuate (3,4-dihydroxybenzoate) during phthalate metabolism. The sequence is that of 3,4-dihydroxyphthalate decarboxylase from Rhodococcus jostii (strain RHA1).